Reading from the N-terminus, the 336-residue chain is Calcium uniporter regulatory subunit MCUb, mitochondrial (336 aa).

The transit peptide at 1-35 (MLQRGLWPWRTRLLPTPGTWRPARPWPLPPPPQVL) directs the protein to the mitochondrion. Residues 179–210 (ESQKKREHHLLEKIDHLKEQLQPLEQVKAGIE) adopt a coiled-coil conformation. 2 helical membrane passes run 220–240 (LLWA…WLTW) and 250–270 (PVTY…FIVT). Residues 297 to 323 (FDVQQYNKLKEDLAKAKESLKQARHSL) are a coiled coil.

Belongs to the MCU (TC 1.A.77) family. As to quaternary structure, homooligomer. Associates with the uniplex complex, composed of MCU, MICU1, MICU2 and EMRE/SMDT1, inhibiting its activity.

It localises to the mitochondrion inner membrane. Its function is as follows. Negative regulator of the mitochondrial calcium uniporter (MCU), a channel that mediates calcium uptake into the mitochondrial matrix. MCUB is required to limit mitochondrial calcium overload during stress. Acts as a dominant-negative regulator that displaces MCU from the functional uniplex complex and thereby decreases the association of calcium sensors MICU1 and MICU2, preventing channel gating. Mitochondrial calcium homeostasis plays key roles in mitochondrial metabolism. Acts as an important regulator of mitochondrial metabolism in response to stress in muscle cells: induced in response to fasting, leading to restrict mitochondrial calcium uptake, resulting in reprogramming of mitochondria toward fatty acid oxidation preference. Acts as a regulator of macrophage polarization during skeletal muscle regeneration: inhibition of mitochondrial calcium uptake drives differentiation of macrophages with anti-inflammatory profile, promoting the differentiation and fusion of satellite cells. The protein is Calcium uniporter regulatory subunit MCUb, mitochondrial of Homo sapiens (Human).